The chain runs to 348 residues: Dihydroorotase (348 aa).

His-17 and His-19 together coordinate Zn(2+). Residues 19-21 (HLR) and Asn-45 contribute to the substrate site. The Zn(2+) site is built by Lys-103, His-140, and His-178. N6-carboxylysine is present on Lys-103. His-140 is a binding site for substrate. Residue Leu-223 coordinates substrate. Asp-251 serves as a coordination point for Zn(2+). Asp-251 is an active-site residue. Substrate-binding residues include His-255 and Ala-267.

This sequence belongs to the metallo-dependent hydrolases superfamily. DHOase family. Class II DHOase subfamily. In terms of assembly, homodimer. Zn(2+) serves as cofactor.

It carries out the reaction (S)-dihydroorotate + H2O = N-carbamoyl-L-aspartate + H(+). Its pathway is pyrimidine metabolism; UMP biosynthesis via de novo pathway; (S)-dihydroorotate from bicarbonate: step 3/3. Its function is as follows. Catalyzes the reversible cyclization of carbamoyl aspartate to dihydroorotate. The chain is Dihydroorotase from Shigella dysenteriae serotype 1 (strain Sd197).